The following is a 191-amino-acid chain: Calcium-binding protein L (191 aa).

G2 carries the N-myristoyl glycine lipid modification. EF-hand domains follow at residues E25–D59, Y60–S95, and P96–T131. Residues D73, D75, N77, R79, and E84 each contribute to the Ca(2+) site.

Belongs to the recoverin family.

This is Calcium-binding protein L (cbpL) from Dictyostelium discoideum (Social amoeba).